We begin with the raw amino-acid sequence, 560 residues long: Aluminum-activated malate transporter 12 (560 aa).

Transmembrane regions (helical) follow at residues 54 to 74, 78 to 98, 104 to 124, 130 to 150, 156 to 176, and 189 to 209; these read VGLS…FKGI, AIWA…ATLC, GLGT…ANDS, AIFI…IRFI, NYDY…VSSY, and FYTI…VFPI. The interval 386 to 421 is disordered; the sequence is LHRHNNKHQNGSISNNKHHQRNSSNSGKDLNGDVSL. Positions 407 to 421 are enriched in polar residues; sequence NSSNSGKDLNGDVSL.

It belongs to the aromatic acid exporter (TC 2.A.85) family. As to expression, expressed in roots, stems, leaves, flowers and pollen. Mainly detected in the roots vascular stele and in the leaves guard cells.

The protein localises to the cell membrane. Malate-sensitive anion transporter permeable to chloride, nitrate, sulfate and malate. Involved in dark-, CO(2)-, abscisic acid- and water-deficient-induced stomatal closure. Belongs to the R-type anion channels. This Arabidopsis thaliana (Mouse-ear cress) protein is Aluminum-activated malate transporter 12 (ALMT12).